The following is a 371-amino-acid chain: Leucine-rich repeat-containing protein 58 (371 aa).

Ser24 carries the phosphoserine modification. 9 LRR repeats span residues 45 to 66 (ALLR…LGSG), 69 to 91 (HLQL…LALR), 92 to 113 (GLRT…PKGL), 121 to 143 (SLQV…LELR), 144 to 166 (ALQT…ENLQ), 167 to 189 (SLEC…GNLP), 190 to 211 (SLNY…LSQL), 213 to 234 (SLRS…ILNL), and 236 to 256 (HLEE…RDLT). Over residues 340–351 (SSASHSSTSQSE) the composition is skewed to low complexity. The segment at 340–361 (SSASHSSTSQSESDSEDEASVA) is disordered.

The protein is Leucine-rich repeat-containing protein 58 (LRRC58) of Homo sapiens (Human).